Here is a 476-residue protein sequence, read N- to C-terminus: Aspartyl/glutamyl-tRNA(Asn/Gln) amidotransferase subunit B (476 aa).

This sequence belongs to the GatB/GatE family. GatB subfamily. As to quaternary structure, heterotrimer of A, B and C subunits.

It carries out the reaction L-glutamyl-tRNA(Gln) + L-glutamine + ATP + H2O = L-glutaminyl-tRNA(Gln) + L-glutamate + ADP + phosphate + H(+). The catalysed reaction is L-aspartyl-tRNA(Asn) + L-glutamine + ATP + H2O = L-asparaginyl-tRNA(Asn) + L-glutamate + ADP + phosphate + 2 H(+). Its function is as follows. Allows the formation of correctly charged Asn-tRNA(Asn) or Gln-tRNA(Gln) through the transamidation of misacylated Asp-tRNA(Asn) or Glu-tRNA(Gln) in organisms which lack either or both of asparaginyl-tRNA or glutaminyl-tRNA synthetases. The reaction takes place in the presence of glutamine and ATP through an activated phospho-Asp-tRNA(Asn) or phospho-Glu-tRNA(Gln). The polypeptide is Aspartyl/glutamyl-tRNA(Asn/Gln) amidotransferase subunit B (Solidesulfovibrio magneticus (strain ATCC 700980 / DSM 13731 / RS-1) (Desulfovibrio magneticus)).